The primary structure comprises 255 residues: Hydroxyacylglutathione hydrolase (255 aa).

7 residues coordinate Zn(2+): His56, His58, Asp60, His61, His114, Asp133, and His171.

Belongs to the metallo-beta-lactamase superfamily. Glyoxalase II family. As to quaternary structure, monomer. Zn(2+) serves as cofactor.

It catalyses the reaction an S-(2-hydroxyacyl)glutathione + H2O = a 2-hydroxy carboxylate + glutathione + H(+). It functions in the pathway secondary metabolite metabolism; methylglyoxal degradation; (R)-lactate from methylglyoxal: step 2/2. In terms of biological role, thiolesterase that catalyzes the hydrolysis of S-D-lactoyl-glutathione to form glutathione and D-lactic acid. In Cereibacter sphaeroides (strain ATCC 17029 / ATH 2.4.9) (Rhodobacter sphaeroides), this protein is Hydroxyacylglutathione hydrolase.